Reading from the N-terminus, the 141-residue chain is Nucleoside diphosphate kinase (141 aa).

Residues K11, F59, R87, T93, R104, and N114 each contribute to the ATP site.

This sequence belongs to the NDK family. As to quaternary structure, homotetramer. Mg(2+) is required as a cofactor.

The protein resides in the cytoplasm. It carries out the reaction a 2'-deoxyribonucleoside 5'-diphosphate + ATP = a 2'-deoxyribonucleoside 5'-triphosphate + ADP. The catalysed reaction is a ribonucleoside 5'-diphosphate + ATP = a ribonucleoside 5'-triphosphate + ADP. Its function is as follows. Major role in the synthesis of nucleoside triphosphates other than ATP. The ATP gamma phosphate is transferred to the NDP beta phosphate via a ping-pong mechanism, using a phosphorylated active-site intermediate. This Saccharophagus degradans (strain 2-40 / ATCC 43961 / DSM 17024) protein is Nucleoside diphosphate kinase.